The chain runs to 325 residues: Odorant receptor 131-2 (325 aa).

Over 1–22 (MNSTSNSSLGNTFISKTLKEKS) the chain is Extracellular. 2 N-linked (GlcNAc...) asparagine glycosylation sites follow: N2 and N6. A helical transmembrane segment spans residues 23-43 (LTVQVLVGILLYVNGLMIFTF). At 44–54 (LKKETFRDTRY) the chain is on the cytoplasmic side. A helical transmembrane segment spans residues 55–75 (ILFAQTLFVDSALMLFADLTL). At 76–91 (VGSAYELFIHIISCYI) the chain is on the extracellular side. An intrachain disulfide couples C89 to C170. The helical transmembrane segment at 92-112 (FCTVMALLSICSPVTLVAMCL) threads the bilayer. Residues 113–135 (ERYVAICLPLRHASISSPKNTIN) are Cytoplasmic-facing. Residues 136–156 (GLLIIWGVSSVIPLFIFIVSF) traverse the membrane as a helical segment. The Extracellular portion of the chain corresponds to 157–190 (TYTPPNAMNSYVVCSNDVMFQVKWLAEMRALSQQ). The chain crosses the membrane as a helical span at residues 191–211 (LLFVIMLCIVGSTYIKIMVAA). Topologically, residues 212–227 (KSASAENKKSTYKGLR) are cytoplasmic. A helical membrane pass occupies residues 228–248 (TVILHGLQLILGMMQLITPYI). At 249-267 (DILTLKVDIMLFINVKFSN) the chain is on the extracellular side. A helical transmembrane segment spans residues 268 to 285 (FMLFWIFPRCLSPLVYGL). The Cytoplasmic segment spans residues 286–325 (RDKKFYNALKYYAFCGIYVCKKHKIKDSKTIRGAVSIAIY).

The protein belongs to the G-protein coupled receptor 1 family. As to quaternary structure, homodimer. Monomer.

The protein resides in the cell membrane. It is found in the cytoplasm. Its function is as follows. Probable olfactory receptor. This chain is Odorant receptor 131-2, found in Danio rerio (Zebrafish).